The sequence spans 87 residues: Small ribosomal subunit protein bS18 (87 aa).

Belongs to the bacterial ribosomal protein bS18 family. In terms of assembly, part of the 30S ribosomal subunit. Forms a tight heterodimer with protein bS6.

Its function is as follows. Binds as a heterodimer with protein bS6 to the central domain of the 16S rRNA, where it helps stabilize the platform of the 30S subunit. This chain is Small ribosomal subunit protein bS18, found in Sulfurovum sp. (strain NBC37-1).